The following is a 454-amino-acid chain: Bifunctional protein GlmU (454 aa).

The pyrophosphorylase stretch occupies residues 1–226 (MALNVVILAA…AVEVEGANNR (226 aa)). Residues 8-11 (LAAG), Lys-22, Gln-73, 78-79 (GT), 100-102 (YGD), Gly-137, Glu-151, Asn-166, and Asn-224 contribute to the UDP-N-acetyl-alpha-D-glucosamine site. Mg(2+) is bound at residue Asp-102. Mg(2+) is bound at residue Asn-224. The linker stretch occupies residues 227–247 (VQLAQLERAYQARAAEKLMLE). An N-acetyltransferase region spans residues 248 to 454 (GANLRDPARI…GWARPVKKAK (207 aa)). Residues Arg-330 and Lys-348 each contribute to the UDP-N-acetyl-alpha-D-glucosamine site. His-360 functions as the Proton acceptor in the catalytic mechanism. Tyr-363 and Asn-374 together coordinate UDP-N-acetyl-alpha-D-glucosamine. Acetyl-CoA contacts are provided by residues Ala-377, 383-384 (NY), Ser-402, Ala-420, and Arg-437.

The protein in the N-terminal section; belongs to the N-acetylglucosamine-1-phosphate uridyltransferase family. It in the C-terminal section; belongs to the transferase hexapeptide repeat family. In terms of assembly, homotrimer. The cofactor is Mg(2+).

The protein resides in the cytoplasm. It catalyses the reaction alpha-D-glucosamine 1-phosphate + acetyl-CoA = N-acetyl-alpha-D-glucosamine 1-phosphate + CoA + H(+). The enzyme catalyses N-acetyl-alpha-D-glucosamine 1-phosphate + UTP + H(+) = UDP-N-acetyl-alpha-D-glucosamine + diphosphate. The protein operates within nucleotide-sugar biosynthesis; UDP-N-acetyl-alpha-D-glucosamine biosynthesis; N-acetyl-alpha-D-glucosamine 1-phosphate from alpha-D-glucosamine 6-phosphate (route II): step 2/2. Its pathway is nucleotide-sugar biosynthesis; UDP-N-acetyl-alpha-D-glucosamine biosynthesis; UDP-N-acetyl-alpha-D-glucosamine from N-acetyl-alpha-D-glucosamine 1-phosphate: step 1/1. It functions in the pathway bacterial outer membrane biogenesis; LPS lipid A biosynthesis. Functionally, catalyzes the last two sequential reactions in the de novo biosynthetic pathway for UDP-N-acetylglucosamine (UDP-GlcNAc). The C-terminal domain catalyzes the transfer of acetyl group from acetyl coenzyme A to glucosamine-1-phosphate (GlcN-1-P) to produce N-acetylglucosamine-1-phosphate (GlcNAc-1-P), which is converted into UDP-GlcNAc by the transfer of uridine 5-monophosphate (from uridine 5-triphosphate), a reaction catalyzed by the N-terminal domain. The protein is Bifunctional protein GlmU of Shewanella piezotolerans (strain WP3 / JCM 13877).